A 319-amino-acid polypeptide reads, in one-letter code: Thiamine pyrophosphokinase (319 aa).

Ser2 bears the N-acetylserine mark.

Belongs to the thiamine pyrophosphokinase family. In terms of assembly, homodimer.

The enzyme catalyses thiamine + ATP = thiamine diphosphate + AMP + H(+). It participates in cofactor biosynthesis; thiamine diphosphate biosynthesis; thiamine diphosphate from thiamine: step 1/1. Essential protein, it is the only enzyme in yeast capable of synthesizing thiamine pyrophosphate (TPP). This is Thiamine pyrophosphokinase from Saccharomyces cerevisiae (strain ATCC 204508 / S288c) (Baker's yeast).